A 359-amino-acid polypeptide reads, in one-letter code: Histidinol-phosphate aminotransferase (359 aa).

N6-(pyridoxal phosphate)lysine is present on K217.

The protein belongs to the class-II pyridoxal-phosphate-dependent aminotransferase family. Histidinol-phosphate aminotransferase subfamily. In terms of assembly, homodimer. Pyridoxal 5'-phosphate serves as cofactor.

It catalyses the reaction L-histidinol phosphate + 2-oxoglutarate = 3-(imidazol-4-yl)-2-oxopropyl phosphate + L-glutamate. Its pathway is amino-acid biosynthesis; L-histidine biosynthesis; L-histidine from 5-phospho-alpha-D-ribose 1-diphosphate: step 7/9. In Salmonella newport (strain SL254), this protein is Histidinol-phosphate aminotransferase.